The following is a 77-amino-acid chain: Apelin (77 aa).

A signal peptide spans 1-22; it reads MNLRLCVQALLLLWLSLTAVCG. A propeptide spanning residues 23–41 is cleaved from the precursor; that stretch reads VPLMLPPDGTGLEEGSMRY. The tract at residues 46-77 is disordered; sequence RTSRTGPGAWQGGRRKFRRQRPRLSHKGPMPF. Residues 58–71 are compositionally biased toward basic residues; it reads GRRKFRRQRPRLSH.

Belongs to the apelin family. In terms of processing, several active peptides may be produced by proteolytic processing of the peptide precursor. Expressed in extraembryonic visceral endoderm and in the primitive streak at 6.5 and 7.5 dpc. Expressed in the anterior visceral yolk sac at 8.25 dpc. Expressed weakly in the embryonic heart at 11.5 dpc. Expressed in the adult heart. Expressed in endothelial cells and cardiomyocytes and weakly expressed in fibroblasts.

The protein localises to the secreted. It is found in the extracellular space. Its function is as follows. Peptide hormone that functions as endogenous ligand for the G-protein-coupled apelin receptor (APLNR/APJ). Functions as a balanced agonist activating both G(i) protein pathway and beta-arrestin pathway of APLNR. Downstream G proteins activation, apelin can inhibit cAMP production and activate key intracellular effectors such as ERKs. On the other hand, APLNR activation induces beta-arrestin recruitment to the membrane leading to desensitization and internalization of the receptor. Apelin also blunts mechanical stretch-induced hypertrophic induction from APLNR. Apelin-36 dissociates more hardly than (pyroglu)apelin-13 from APLNR. Involved in the regulation of cardiac precursor cell movements during gastrulation and heart morphogenesis. Has an inhibitory effect on cytokine production in response to T-cell receptor/CD3 cross-linking; the oral intake of apelin in the colostrum and the milk might therefore modulate immune responses in neonates. Plays a role in early coronary blood vessels formation. Mediates myocardial contractility in an ERK1/2-dependent manner. May also have a role in the central control of body fluid homeostasis by influencing vasopressin release and drinking behavior. The protein is Apelin of Mus musculus (Mouse).